A 454-amino-acid polypeptide reads, in one-letter code: MKISLTNRVRTTIRERKLFREGNRLVLVALSGGADSVALLCVLRELGYETVAAHCNFHLRGVESDEDAAFVEGLCRDLDVPLHRIDFDTVRYARERSISIEMAARELRYEWFGLLRKELAIEYVAVAHHADDNAETMVLNLCRGTGISGLCGMPYKRNDGIVRPLLDATRDEIEAYLLDQKITYRTDSSNEDTRFRRNLVRHRIMPLLKELNPSLQEALLRTRENLEGVAAFFSKATEDFHNTLRATASISIREVKETPAPFTLLYDLLHPYGFNRDQIREVVTSLDNPPGASFFSSSHRLLRERDRLTVLPLSPKMEVPELFGLKIGDSFLDLPDGKQLSWQRGTPADLDLEGLRLPNTKLLLPLAFVESLQEELGVRRPQRGDHIHPYGMKGCKTVSRFFIDRHVPRRRREEAWLLCQGTEVVWIMGYAADRRFAIDELSDTEEYLLFSFEL.

31-36 (SGGADS) is a binding site for ATP.

It belongs to the tRNA(Ile)-lysidine synthase family.

It localises to the cytoplasm. The catalysed reaction is cytidine(34) in tRNA(Ile2) + L-lysine + ATP = lysidine(34) in tRNA(Ile2) + AMP + diphosphate + H(+). Functionally, ligates lysine onto the cytidine present at position 34 of the AUA codon-specific tRNA(Ile) that contains the anticodon CAU, in an ATP-dependent manner. Cytidine is converted to lysidine, thus changing the amino acid specificity of the tRNA from methionine to isoleucine. This is tRNA(Ile)-lysidine synthase from Porphyromonas gingivalis (strain ATCC 33277 / DSM 20709 / CIP 103683 / JCM 12257 / NCTC 11834 / 2561).